We begin with the raw amino-acid sequence, 195 residues long: MEEGLLEIMTKDGGDMPAPLEVSTVPAVGDVISGEYNGGMKELMEHLKAQLQALFEDVRAMRGALDEQASHIQVLSDDVCANQRAIVSMCQIMTTAPRQGGLGVVGNKGNFPGARRDPETPSPGIGDSGLLGRDPEDEEDDDEEEKEMPSSATPTSHCELPESPCAGLLGGDGPLVEPLDLPDITLLQLEGEASL.

The stretch at 39–68 (GMKELMEHLKAQLQALFEDVRAMRGALDEQ) forms a coiled coil. The tract at residues 98–175 (RQGGLGVVGN…AGLLGGDGPL (78 aa)) is disordered. Over residues 135 to 146 (PEDEEDDDEEEK) the composition is skewed to acidic residues.

The sequence is that of Coiled-coil domain-containing protein 184 (CCDC184) from Bos taurus (Bovine).